The sequence spans 376 residues: MSNSTLTLAQMLIARRSLTPDDDGCQKMIMHRLAGLGFKSDSMTFGEVENLWTRKGSDAPLVCFAGHTDVVPTGPVTQWDSDPFTPVVRDGFLYGRGAADMKTSLAAFVTAIEEFIELHPDHKGSIALLITSDEEGPAVDGTVKVVEALQTRGEMIDYCIVGEPTCTNQLGDTIKNGRRGSLSGNLTVRGIQGHIAYPHLARNPIHTAAPAIAELAQTVWDNGNEYFPATTWHISNIHGGTGATNVIPGEINLLFNFRFSTASTVDSLKARVHEILDRHGLDYELIWELSGKPYLTPRGTLADAVSAAIREVTGIEPELSTTGGTSDGRFIADICQQVVEFGPRNATIHKINESVEVADVERLARIYRLTLENLLL.

His-67 serves as a coordination point for Zn(2+). Residue Asp-69 is part of the active site. Asp-100 contributes to the Zn(2+) binding site. Glu-134 serves as the catalytic Proton acceptor. Residues Glu-135, Glu-163, and His-349 each coordinate Zn(2+).

The protein belongs to the peptidase M20A family. DapE subfamily. In terms of assembly, homodimer. Requires Zn(2+) as cofactor. The cofactor is Co(2+).

It catalyses the reaction N-succinyl-(2S,6S)-2,6-diaminopimelate + H2O = (2S,6S)-2,6-diaminopimelate + succinate. It participates in amino-acid biosynthesis; L-lysine biosynthesis via DAP pathway; LL-2,6-diaminopimelate from (S)-tetrahydrodipicolinate (succinylase route): step 3/3. Its function is as follows. Catalyzes the hydrolysis of N-succinyl-L,L-diaminopimelic acid (SDAP), forming succinate and LL-2,6-diaminopimelate (DAP), an intermediate involved in the bacterial biosynthesis of lysine and meso-diaminopimelic acid, an essential component of bacterial cell walls. The chain is Succinyl-diaminopimelate desuccinylase from Nitrosomonas europaea (strain ATCC 19718 / CIP 103999 / KCTC 2705 / NBRC 14298).